Consider the following 346-residue polypeptide: Heparan sulfate glucosamine 3-O-sulfotransferase 5 (346 aa).

At 1–12 the chain is on the cytoplasmic side; the sequence is MLFKQQVWLRQK. Residues 13–32 form a helical; Signal-anchor for type II membrane protein membrane-spanning segment; that stretch reads LLVLGSLAVGSLLYLVARVG. At 33–346 the chain is on the lumenal side; that stretch reads SLDRLQPICP…QITGRTLNWP (314 aa). The N-linked (GlcNAc...) asparagine glycan is linked to N75. Position 100-104 (100-104) interacts with 3'-phosphoadenylyl sulfate; that stretch reads KGGTR. Residues 122–128 and 155–158 contribute to the substrate site; these read EIHFFDN and KSPA. N-linked (GlcNAc...) asparagine glycosylation occurs at N173. Positions 183 and 191 each coordinate 3'-phosphoadenylyl sulfate. N204 is a glycosylation site (N-linked (GlcNAc...) asparagine). 226–227 contacts substrate; sequence YK. The N-linked (GlcNAc...) asparagine glycan is linked to N287. Y293 is a 3'-phosphoadenylyl sulfate binding site. A disulfide bridge connects residues C294 and C304. Residue 309-313 coordinates 3'-phosphoadenylyl sulfate; it reads KGRIH.

The protein belongs to the sulfotransferase 1 family.

Its subcellular location is the golgi apparatus membrane. It carries out the reaction alpha-D-glucosaminyl-[heparan sulfate](n) + 3'-phosphoadenylyl sulfate = 3-sulfo-alpha-D-glucosaminyl-[heparan sulfate](n) + adenosine 3',5'-bisphosphate + H(+). Sulfotransferase that utilizes 3'-phospho-5'-adenylyl sulfate (PAPS) to catalyze the transfer of a sulfo group to position 3 of glucosamine residues in heparan. Catalyzes the rate limiting step in the biosynthesis of heparan sulfate (HSact). This modification is a crucial step in the biosynthesis of anticoagulant heparan sulfate as it completes the structure of the antithrombin pentasaccharide binding site. Also generates GlcUA-GlcNS or IdoUA-GlcNS and IdoUA2S-GlcNH2. The sequence is that of Heparan sulfate glucosamine 3-O-sulfotransferase 5 (Hs3st5) from Mus musculus (Mouse).